We begin with the raw amino-acid sequence, 296 residues long: Phosphatidylglycerol--prolipoprotein diacylglyceryl transferase (296 aa).

The next 3 helical transmembrane spans lie at L17–G37, M59–Y79, and G97–W117. An a 1,2-diacyl-sn-glycero-3-phospho-(1'-sn-glycerol)-binding site is contributed by R142. 2 helical membrane passes run M230–F250 and L265–W285.

The protein belongs to the Lgt family.

Its subcellular location is the cell inner membrane. It catalyses the reaction L-cysteinyl-[prolipoprotein] + a 1,2-diacyl-sn-glycero-3-phospho-(1'-sn-glycerol) = an S-1,2-diacyl-sn-glyceryl-L-cysteinyl-[prolipoprotein] + sn-glycerol 1-phosphate + H(+). It participates in protein modification; lipoprotein biosynthesis (diacylglyceryl transfer). Its function is as follows. Catalyzes the transfer of the diacylglyceryl group from phosphatidylglycerol to the sulfhydryl group of the N-terminal cysteine of a prolipoprotein, the first step in the formation of mature lipoproteins. In Burkholderia thailandensis (strain ATCC 700388 / DSM 13276 / CCUG 48851 / CIP 106301 / E264), this protein is Phosphatidylglycerol--prolipoprotein diacylglyceryl transferase.